Here is a 362-residue protein sequence, read N- to C-terminus: tRNA-specific 2-thiouridylase MnmA (362 aa).

ATP contacts are provided by residues 9-16 (GMSGGVDS) and Met35. An interaction with target base in tRNA region spans residues 95–97 (NPD). Cys100 (nucleophile) is an active-site residue. A disulfide bridge links Cys100 with Cys196. Gly124 is an ATP binding site. The interaction with tRNA stretch occupies residues 146 to 148 (KDQ). The active-site Cysteine persulfide intermediate is the Cys196. An interaction with tRNA region spans residues 308–309 (RY).

Belongs to the MnmA/TRMU family.

It is found in the cytoplasm. It carries out the reaction S-sulfanyl-L-cysteinyl-[protein] + uridine(34) in tRNA + AH2 + ATP = 2-thiouridine(34) in tRNA + L-cysteinyl-[protein] + A + AMP + diphosphate + H(+). Functionally, catalyzes the 2-thiolation of uridine at the wobble position (U34) of tRNA, leading to the formation of s(2)U34. This is tRNA-specific 2-thiouridylase MnmA from Nitrosomonas europaea (strain ATCC 19718 / CIP 103999 / KCTC 2705 / NBRC 14298).